The following is a 675-amino-acid chain: E3 ubiquitin-protein ligase COP1 (675 aa).

Residues 1-40 (MEEISTDPVVPAVKPDPRTSSVGEGANRHENDDGGSGGSE) are disordered. Cysteine 52, cysteine 55, cysteine 67, histidine 69, cysteine 72, cysteine 75, cysteine 86, and cysteine 89 together coordinate Zn(2+). The segment at 52–90 (CPICMQIIKDAFLTACGHSFCYMCIITHLRNKSDCPCCS) adopts an RING-type zinc-finger fold. A CLS (cytoplasmic localization signal) region spans residues 67–177 (CGHSFCYMCI…LDFLHCLRKQ (111 aa)). Residues 120 to 177 (ASPLDQFREALQRGCDVSIKEVDNLLTLLAERKRKMEQEEAERNMQILLDFLHCLRKQ) form an SNLS (subnuclear localization signal) region. Positions 134–201 (CDVSIKEVDN…IKEDINAVER (68 aa)) form a coiled coil. Residues 261-290 (EGKAQGSSHGLPKKDALSGSDSQSLNQSTV) form a disordered region. Over residues 279–290 (GSDSQSLNQSTV) the composition is skewed to polar residues. The Bipartite nuclear localization signal motif lies at 294-317 (RKKRIHAQFNDLQECYLQKRRQLA). 7 WD repeats span residues 369-408 (HSAN…NEPA), 418-458 (STRS…SLME), 461-501 (EHEK…SVIN), 503-543 (DMKA…QPLH), 547-585 (GHKK…PVRT), 588-627 (GHTN…PVTS), and 642-675 (AGSY…VLAA). A binding of human TRIB1 COP1-binding-motif region spans residues 593–595 (KNF).

Homodimer. Interacts with HY5, HYH, BBX24/STO, BBX25/STH, CIP8, COP10, SPA1, SPA2, SPA3, SPA4 and UVR8 and phosphorylated PHYA. Light induces dissociation of the SPA1/COP1 complex. Interacts with HRT/RPP8 and triggers it to the 26s proteasome. Binds to CRY2; this competitive interaction prevents triggering to proteasome of other binding proteins. Binds to SHW1 in the nucleus. Bonds to CIP7. Interacts with CSU2. Binds to CIP1. Interacts directly with DHU1. Associates to UNE10/PIF8. Binds directly to PCH1 and PCHL. Autoubiquitinated.

Its subcellular location is the nucleus. It localises to the cytoplasm. It catalyses the reaction S-ubiquitinyl-[E2 ubiquitin-conjugating enzyme]-L-cysteine + [acceptor protein]-L-lysine = [E2 ubiquitin-conjugating enzyme]-L-cysteine + N(6)-ubiquitinyl-[acceptor protein]-L-lysine.. Its pathway is protein modification; protein ubiquitination. Its function is as follows. E3 ubiquitin-protein ligase that acts as a repressor of photomorphogenesis and as an activator of etiolation in darkness. E3 ubiquitin ligases accept ubiquitin from an E2 ubiquitin-conjugating enzyme in the form of a thioester and then directly transfers the ubiquitin to targeted substrates. Represses photomorphogenesis in darkness by mediating ubiquitination and subsequent proteasomal degradation of light-induced transcription factors such as HY5, HYH and LAF1. Down-regulates MYB21, probably via ubiquitination process. Light stimuli abrogate the repression of photomorphogenesis, possibly due to its localization to the cytoplasm. Could play a role in switching between skotomorphogenetic and photomorphogenetic pathways. Mediates the ubiquitination-dependent degradation of HY5 in the darkness during seedling development (e.g. hypocotyl growth). Represses CIP7 in darkness. Triggers ubiquitination and subsequent protein degradation of UNE10/PIF8, PCH1 and PCHL in the dark. The protein is E3 ubiquitin-protein ligase COP1 of Arabidopsis thaliana (Mouse-ear cress).